Here is a 131-residue protein sequence, read N- to C-terminus: Holo-[acyl-carrier-protein] synthase (131 aa).

Positions 8 and 63 each coordinate Mg(2+).

This sequence belongs to the P-Pant transferase superfamily. AcpS family. Mg(2+) is required as a cofactor.

It is found in the cytoplasm. It carries out the reaction apo-[ACP] + CoA = holo-[ACP] + adenosine 3',5'-bisphosphate + H(+). Its function is as follows. Transfers the 4'-phosphopantetheine moiety from coenzyme A to a Ser of acyl-carrier-protein. The sequence is that of Holo-[acyl-carrier-protein] synthase from Shewanella piezotolerans (strain WP3 / JCM 13877).